Here is a 483-residue protein sequence, read N- to C-terminus: Matrix metalloproteinase-20 (483 aa).

Residues 1 to 22 form the signal peptide; sequence MKVLPASGLAVFLIMALKFSTA. Positions 23 to 107 are excised as a propeptide; the sequence is APSLVAASPR…PRCGVPDVAN (85 aa). The Cysteine switch motif lies at 98–105; the sequence is PRCGVPDV. Zn(2+) is bound at residue Cys100. Ca(2+) is bound by residues Glu164, Ala165, and Asp166. Zn(2+) contacts are provided by His176 and Asp178. Asp183, Gly184, Arg186, and Thr188 together coordinate Ca(2+). His191 serves as a coordination point for Zn(2+). Ca(2+)-binding residues include Glu197, Gly198, Gly200, and Asp202. His204 contacts Zn(2+). Residues Asp206 and Glu209 each contribute to the Ca(2+) site. Position 226 (His226) interacts with Zn(2+). Glu227 is an active-site residue. The Zn(2+) site is built by His230 and His236. 4 Hemopexin repeats span residues 293 to 343, 344 to 389, 391 to 439, and 440 to 483; these read PDLC…FPQL, MSNV…GFPR, VQQI…FSGV, and NGQI…WIGC. Cysteines 296 and 483 form a disulfide.

The protein belongs to the peptidase M10A family. The cofactor is Zn(2+). Ca(2+) is required as a cofactor. Post-translationally, autoactivates at least at the 107-Asn-|-Tyr-108 site. Expressed specifically in the enamel organ.

It is found in the secreted. Its subcellular location is the extracellular space. The protein resides in the extracellular matrix. Functionally, degrades amelogenin, the major protein component of the enamel matrix and two of the macromolecules characterizing the cartilage extracellular matrix: aggrecan and the cartilage oligomeric matrix protein (COMP). May play a central role in tooth enamel formation. Cleaves aggrecan at the '360-Asn-|-Phe-361' site. The sequence is that of Matrix metalloproteinase-20 (MMP20) from Homo sapiens (Human).